A 465-amino-acid polypeptide reads, in one-letter code: Cysteine--tRNA ligase (465 aa).

Cys-27 provides a ligand contact to Zn(2+). Residues 29 to 39 carry the 'HIGH' region motif; sequence PTVYDDAHLGH. Residues 153 to 173 form a disordered region; sequence DISHKVSDDDTQSRVEHNSEK. Residues Cys-208, His-237, and Glu-241 each contribute to the Zn(2+) site. Positions 269–273 match the 'KMSKS' region motif; sequence KMSKS. ATP is bound at residue Lys-272.

This sequence belongs to the class-I aminoacyl-tRNA synthetase family. As to quaternary structure, monomer. Zn(2+) serves as cofactor.

The protein localises to the cytoplasm. The catalysed reaction is tRNA(Cys) + L-cysteine + ATP = L-cysteinyl-tRNA(Cys) + AMP + diphosphate. This chain is Cysteine--tRNA ligase, found in Sulfurovum sp. (strain NBC37-1).